The following is a 230-amino-acid chain: Large ribosomal subunit protein uL1 (230 aa).

The protein belongs to the universal ribosomal protein uL1 family. As to quaternary structure, part of the 50S ribosomal subunit.

In terms of biological role, binds directly to 23S rRNA. The L1 stalk is quite mobile in the ribosome, and is involved in E site tRNA release. Protein L1 is also a translational repressor protein, it controls the translation of the L11 operon by binding to its mRNA. In Staphylococcus aureus (strain Mu3 / ATCC 700698), this protein is Large ribosomal subunit protein uL1.